The chain runs to 135 residues: Transcription antitermination protein NusB (135 aa).

It belongs to the NusB family.

Functionally, involved in transcription antitermination. Required for transcription of ribosomal RNA (rRNA) genes. Binds specifically to the boxA antiterminator sequence of the ribosomal RNA (rrn) operons. The sequence is that of Transcription antitermination protein NusB from Wolinella succinogenes (strain ATCC 29543 / DSM 1740 / CCUG 13145 / JCM 31913 / LMG 7466 / NCTC 11488 / FDC 602W) (Vibrio succinogenes).